A 150-amino-acid chain; its full sequence is Viral late gene transcription factor 2 (150 aa).

This sequence belongs to the chordopoxvirinae VLTF-2 family. As to quaternary structure, interacts with itself. Interacts with the late transcription factors VLTF-1.

In terms of biological role, acts with RNA polymerase to initiate transcription from late gene promoters. The sequence is that of Viral late gene transcription factor 2 (VLTF2) from Homo sapiens (Human).